We begin with the raw amino-acid sequence, 75 residues long: Small ribosomal subunit protein bS18 (75 aa).

This sequence belongs to the bacterial ribosomal protein bS18 family. As to quaternary structure, part of the 30S ribosomal subunit. Forms a tight heterodimer with protein bS6.

Functionally, binds as a heterodimer with protein bS6 to the central domain of the 16S rRNA, where it helps stabilize the platform of the 30S subunit. This is Small ribosomal subunit protein bS18 from Cereibacter sphaeroides (strain ATCC 17029 / ATH 2.4.9) (Rhodobacter sphaeroides).